The sequence spans 429 residues: Glutamate-1-semialdehyde 2,1-aminomutase 1 (429 aa).

Residue K268 is modified to N6-(pyridoxal phosphate)lysine.

This sequence belongs to the class-III pyridoxal-phosphate-dependent aminotransferase family. HemL subfamily. Homodimer. It depends on pyridoxal 5'-phosphate as a cofactor.

The protein localises to the cytoplasm. It catalyses the reaction (S)-4-amino-5-oxopentanoate = 5-aminolevulinate. It participates in porphyrin-containing compound metabolism; protoporphyrin-IX biosynthesis; 5-aminolevulinate from L-glutamyl-tRNA(Glu): step 2/2. The sequence is that of Glutamate-1-semialdehyde 2,1-aminomutase 1 from Listeria welshimeri serovar 6b (strain ATCC 35897 / DSM 20650 / CCUG 15529 / CIP 8149 / NCTC 11857 / SLCC 5334 / V8).